A 2346-amino-acid polypeptide reads, in one-letter code: N-benzoylphenylalaninol synthetase apmA (2346 aa).

An adenylation 1 region spans residues E263–R652. In terms of domain architecture, Carrier 1 spans M784–R860. At S821 the chain carries O-(pantetheine 4'-phosphoryl)serine. Residues Q896–L1306 form a condensation region. Positions S1330–R1713 are adenylation 2. In terms of domain architecture, Carrier 2 spans S1842 to L1924. O-(pantetheine 4'-phosphoryl)serine is present on S1883. Residues V1960 to G2311 are reductase (R) domain.

The protein belongs to the NRP synthetase family.

The enzyme catalyses benzoate + L-phenylalanine + 2 AH2 + 2 ATP = N-benzoyl-L-phenylalaninol + 2 A + 2 AMP + 2 diphosphate + H(+). The protein operates within secondary metabolite biosynthesis. Nonribosomal peptide synthase; part of the gene cluster that mediates the biosynthesis of asperphenamate, a rare linear amino acid ester that exhibits antitumor activity towards a number of cell lines. The structure of asperphenamate contains two subunits, N-benzoylphenylalanine and N-benzoylphenylalaninol, which are connected by an inter-molecular ester bond. The first step of asperphenamate biosynthesis is the generation of N-benzoylphenylalaninol by the nonribosomal peptide synthase apmA. Using phenylalanine and benzoic acid as substrates, apmA catalyzes amide bond formation and tethers the intermediate into the NRPS chain. Then, the terminal R domain of apmA catalyzes the reduction reaction to get the shunt product N-benzoylphenylalaninol. Subsequently, the nonribosomal peptide synthase apmB activates the same substrates as does apmA (phenylalanine and benzoic acid) to produce N-benzoylphenylalanine before condensing N-benzoylphenylalanine and N-benzoylphenylalaninol to release asperphenamate. The chain is N-benzoylphenylalaninol synthetase apmA from Penicillium brevicompactum.